The sequence spans 392 residues: Bifunctional enzyme Fae/Hps (392 aa).

The formaldehyde-activating enzyme stretch occupies residues 1–161; sequence MFQIGEALMG…EESNKSTHAI (161 aa). The active-site Proton donor is His-17. Residues Asp-19, Leu-48, Lys-66, Thr-68, and Gln-83 each contribute to the substrate site. Residues 162 to 392 form a 3-hexulose-6-phosphate synthase region; sequence MGFKVTRLWD…IDQFRVMTDF (231 aa).

In the N-terminal section; belongs to the formaldehyde-activating enzyme family. It in the C-terminal section; belongs to the HPS/KGPDC family. HPS subfamily.

The catalysed reaction is 5,6,7,8-tetrahydromethanopterin + formaldehyde = 5,10-methylenetetrahydromethanopterin + H2O. It carries out the reaction D-ribulose 5-phosphate + formaldehyde = D-arabino-hex-3-ulose 6-phosphate. Its pathway is carbohydrate biosynthesis; D-ribose 5-phosphate biosynthesis. In terms of biological role, catalyzes the condensation of formaldehyde with tetrahydromethanopterin (H(4)MPT) to 5,10-methylenetetrahydromethanopterin. Catalyzes the reversible formation of ribulose-5-phosphate and formaldehyde from 3-hexulose-6-phosphate. In Methanosarcina acetivorans (strain ATCC 35395 / DSM 2834 / JCM 12185 / C2A), this protein is Bifunctional enzyme Fae/Hps.